The sequence spans 609 residues: NADH-ubiquinone oxidoreductase chain 5 (609 aa).

The next 15 helical transmembrane spans lie at 6–26, 35–55, 84–104, 116–138, 140–160, 171–191, 240–260, 272–292, 300–319, 330–350, 365–385, 409–429, 456–476, 481–501, and 581–601; these read SSIL…MTNL, YATS…LLFF, YFSI…MQFS, RFIK…NNLF, LFIG…WWYG, AILY…WFCL, TPVS…FLMI, IMTA…ICAL, IVAF…LGIN, THAF…HSLN, MPFT…MPFL, MITL…IYFV, LALG…PTNI, MPWH…AIAL, and GLIK…FILH.

Belongs to the complex I subunit 5 family. Core subunit of respiratory chain NADH dehydrogenase (Complex I) which is composed of 45 different subunits.

It localises to the mitochondrion inner membrane. The enzyme catalyses a ubiquinone + NADH + 5 H(+)(in) = a ubiquinol + NAD(+) + 4 H(+)(out). Its function is as follows. Core subunit of the mitochondrial membrane respiratory chain NADH dehydrogenase (Complex I) which catalyzes electron transfer from NADH through the respiratory chain, using ubiquinone as an electron acceptor. Essential for the catalytic activity and assembly of complex I. The polypeptide is NADH-ubiquinone oxidoreductase chain 5 (Rattus norvegicus (Rat)).